A 399-amino-acid polypeptide reads, in one-letter code: Phosphomevalonate dehydratase large subunit (399 aa).

(R)-5-phosphomevalonate is bound by residues Gly-54, Val-55, Ser-56, Asn-85, and Pro-86. Cys-125 serves as a coordination point for [4Fe-4S] cluster. Residues Glu-144 and Ser-145 each coordinate (R)-5-phosphomevalonate. Cys-298 and Cys-355 together coordinate [4Fe-4S] cluster. Lys-375 lines the (R)-5-phosphomevalonate pocket.

It belongs to the AcnX type II large subunit family. As to quaternary structure, heterodimer composed of a large subunit (PMDh-L) and a small subunit (PMDh-S). [4Fe-4S] cluster is required as a cofactor.

The catalysed reaction is (R)-5-phosphomevalonate = (2E)-3-methyl-5-phosphooxypent-2-enoate + H2O. It functions in the pathway isoprenoid biosynthesis; isopentenyl diphosphate biosynthesis via mevalonate pathway. In terms of biological role, component of a hydro-lyase that catalyzes the dehydration of mevalonate 5-phosphate (MVA5P) to form trans-anhydromevalonate 5-phosphate (tAHMP). Involved in the archaeal mevalonate (MVA) pathway, which provides fundamental precursors for isoprenoid biosynthesis, such as isopentenyl diphosphate (IPP) and dimethylallyl diphosphate (DMAPP). The chain is Phosphomevalonate dehydratase large subunit from Methanothermobacter thermautotrophicus (strain ATCC 29096 / DSM 1053 / JCM 10044 / NBRC 100330 / Delta H) (Methanobacterium thermoautotrophicum).